Consider the following 468-residue polypeptide: Hydroxymethylglutaryl-CoA lyase, mitochondrial (468 aa).

The Pyruvate carboxyltransferase domain maps to 168–435 (VKIVEVGPRD…HTNVDLGKLI (268 aa)). R176 contacts substrate. A divalent metal cation contacts are provided by D177, H368, and H370. The active site involves C401. N410 serves as a coordination point for a divalent metal cation.

The protein belongs to the HMG-CoA lyase family. In terms of assembly, homodimer. A divalent metal cation serves as cofactor.

The protein resides in the mitochondrion matrix. The enzyme catalyses (3S)-3-hydroxy-3-methylglutaryl-CoA = acetoacetate + acetyl-CoA. Its pathway is metabolic intermediate metabolism; (S)-3-hydroxy-3-methylglutaryl-CoA degradation; acetoacetate from (S)-3-hydroxy-3-methylglutaryl-CoA: step 1/1. Involved in the catabolism of branched amino acids such as leucine. The chain is Hydroxymethylglutaryl-CoA lyase, mitochondrial (HMGCL) from Arabidopsis thaliana (Mouse-ear cress).